Reading from the N-terminus, the 406-residue chain is Phosphopentomutase (406 aa).

Positions 10, 305, 310, 346, 347, and 358 each coordinate Mn(2+).

This sequence belongs to the phosphopentomutase family. It depends on Mn(2+) as a cofactor.

It localises to the cytoplasm. The enzyme catalyses 2-deoxy-alpha-D-ribose 1-phosphate = 2-deoxy-D-ribose 5-phosphate. The catalysed reaction is alpha-D-ribose 1-phosphate = D-ribose 5-phosphate. It participates in carbohydrate degradation; 2-deoxy-D-ribose 1-phosphate degradation; D-glyceraldehyde 3-phosphate and acetaldehyde from 2-deoxy-alpha-D-ribose 1-phosphate: step 1/2. In terms of biological role, isomerase that catalyzes the conversion of deoxy-ribose 1-phosphate (dRib-1-P) and ribose 1-phosphate (Rib-1-P) to deoxy-ribose 5-phosphate (dRib-5-P) and ribose 5-phosphate (Rib-5-P), respectively. This Sinorhizobium fredii (strain NBRC 101917 / NGR234) protein is Phosphopentomutase.